We begin with the raw amino-acid sequence, 279 residues long: Putative hydroxypyruvate isomerase (279 aa).

Residues Glu-155 and Glu-256 each act as proton donor/acceptor in the active site. Residues 260-279 form a disordered region; it reads GDDPSAQSFSWLPAGARAAR.

The protein belongs to the hyi family.

It carries out the reaction 3-hydroxypyruvate = 2-hydroxy-3-oxopropanoate. Functionally, catalyzes the reversible isomerization between hydroxypyruvate and 2-hydroxy-3-oxopropanoate (also termed tartronate semialdehyde). The protein is Putative hydroxypyruvate isomerase of Streptomyces coelicolor (strain ATCC BAA-471 / A3(2) / M145).